Here is a 263-residue protein sequence, read N- to C-terminus: MESITISKIQNWKKNQIKFAAITAYDFSFSRLFEKEGIPIMLVGDSLGMTIQGHNSTLPVKIQDIKYHTKAVRRGAPNSFLLSDLPFMSYYSIEETLKNTAKIIQSGANMIKIEGGKWLVETVKELSKRSILVCGHIGLTPQSINFLSGYKIQGKEKNDAQRIIDEAFILEEAGIKMLVLECIPSLLAKKITENLSIPVIGIGSGHHTDGQILVMQDLLGITDGKKLKFVKNFLCHNGSIQNAIKQYINEVKNGNFPSEKYSF.

The Mg(2+) site is built by D45 and D84. 3-methyl-2-oxobutanoate is bound by residues 45–46 (DS), D84, and K112. Residue E114 coordinates Mg(2+). E181 functions as the Proton acceptor in the catalytic mechanism.

It belongs to the PanB family. As to quaternary structure, homodecamer; pentamer of dimers. It depends on Mg(2+) as a cofactor.

Its subcellular location is the cytoplasm. It carries out the reaction 3-methyl-2-oxobutanoate + (6R)-5,10-methylene-5,6,7,8-tetrahydrofolate + H2O = 2-dehydropantoate + (6S)-5,6,7,8-tetrahydrofolate. Its pathway is cofactor biosynthesis; (R)-pantothenate biosynthesis; (R)-pantoate from 3-methyl-2-oxobutanoate: step 1/2. In terms of biological role, catalyzes the reversible reaction in which hydroxymethyl group from 5,10-methylenetetrahydrofolate is transferred onto alpha-ketoisovalerate to form ketopantoate. This Buchnera aphidicola subsp. Schizaphis graminum (strain Sg) protein is 3-methyl-2-oxobutanoate hydroxymethyltransferase.